A 161-amino-acid chain; its full sequence is uncharacterized protein (161 aa).

A helical membrane pass occupies residues 16–36 (KLGLVVAIFFFMMGTTVVVLY).

The protein localises to the membrane. This is an uncharacterized protein from Encephalitozoon cuniculi (strain GB-M1) (Microsporidian parasite).